A 419-amino-acid polypeptide reads, in one-letter code: UDP-N-acetylglucosamine 1-carboxyvinyltransferase (419 aa).

Residue 22–23 participates in phosphoenolpyruvate binding; it reads KN. Position 95 (Arg95) interacts with UDP-N-acetyl-alpha-D-glucosamine. The Proton donor role is filled by Cys119. Cys119 carries the 2-(S-cysteinyl)pyruvic acid O-phosphothioketal modification. UDP-N-acetyl-alpha-D-glucosamine-binding positions include 164–167, Asp308, and Ile330; that span reads KVSV.

Belongs to the EPSP synthase family. MurA subfamily.

The protein localises to the cytoplasm. The enzyme catalyses phosphoenolpyruvate + UDP-N-acetyl-alpha-D-glucosamine = UDP-N-acetyl-3-O-(1-carboxyvinyl)-alpha-D-glucosamine + phosphate. Its pathway is cell wall biogenesis; peptidoglycan biosynthesis. Functionally, cell wall formation. Adds enolpyruvyl to UDP-N-acetylglucosamine. This is UDP-N-acetylglucosamine 1-carboxyvinyltransferase from Rickettsia africae (strain ESF-5).